A 284-amino-acid chain; its full sequence is WUSCHEL-related homeobox 10 (284 aa).

A disordered region spans residues 1-43; it reads MDRTATASWEVMSRRGEQQQQLMMQAPASHNGGSGGGEPARSR. The segment at residues 39–103 is a DNA-binding region (homeobox; WUS-type); that stretch reads PARSRWAPKP…NRRSRSRRRA (65 aa).

It belongs to the WUS homeobox family.

The protein resides in the nucleus. Its function is as follows. Transcription factor which may be involved in developmental processes. The polypeptide is WUSCHEL-related homeobox 10 (WOX10) (Oryza sativa subsp. japonica (Rice)).